Consider the following 131-residue polypeptide: TQTSHPAKFHVEGEVYCNVCHSRNLINELSERMAGAQVQLDCKDDSKKVIYSIGGETDQDGVYRLPVVGYHEDCEIKLVKSSRPDCSEIPKLAKGTIQTSKVDLSKNTTITEKTRHVKPLSFRAKTDAPGC.

3 cysteine pairs are disulfide-bonded: cysteine 17/cysteine 86, cysteine 20/cysteine 131, and cysteine 42/cysteine 74. Histidine 21, aspartate 45, aspartate 73, and glutamate 88 together coordinate Zn(2+). Asparagine 107 carries an N-linked (GlcNAc...) asparagine glycan.

The protein belongs to the Ole e I family. Exists in two variants: glycosylated and non-glycosylated. Carries a complex, major N-linked glycan, with a alpha-1,3-fucose residue in its structure and probably also a beta-1,2-xylose. The average modification of molecular mass due to glycosylation is approximately 969 Da.

Its subcellular location is the secreted. In Plantago lanceolata (English plantain), this protein is Major pollen allergen Pla l 1.